Consider the following 173-residue polypeptide: Large ribosomal subunit protein uL10 (173 aa).

It belongs to the universal ribosomal protein uL10 family. In terms of assembly, part of the ribosomal stalk of the 50S ribosomal subunit. The N-terminus interacts with L11 and the large rRNA to form the base of the stalk. The C-terminus forms an elongated spine to which L12 dimers bind in a sequential fashion forming a multimeric L10(L12)X complex.

Forms part of the ribosomal stalk, playing a central role in the interaction of the ribosome with GTP-bound translation factors. This Corynebacterium aurimucosum (strain ATCC 700975 / DSM 44827 / CIP 107346 / CN-1) (Corynebacterium nigricans) protein is Large ribosomal subunit protein uL10.